Here is an 80-residue protein sequence, read N- to C-terminus: MATLPPTANPSQQPLNLEDEDGILDEYDQYSLAHPCVVGGGRKGRTKREAAANTNRPSPGGHERKLLTKFQNSERKKAWR.

Disordered regions lie at residues 1 to 21 (MATLPPTANPSQQPLNLEDED) and 38 to 80 (VGGG…KAWR). Over residues 61–80 (GHERKLLTKFQNSERKKAWR) the composition is skewed to basic and acidic residues. Positions 64-80 (RKLLTKFQNSERKKAWR) match the Nuclear localization signal motif.

It belongs to the NUPR family. In terms of assembly, monomer. Directly interacts with MSL1 and binds MORF4L1, two components of histone acetyltransferase complex; the interaction with MORF4L1 may be mediated by MSL1. Interacts with EP300; this interaction enhances the effect of EP300 on PAX2 transcription factor activity. Interacts with PAXIP1; this interaction prevents PAXIP1 inhibition of PAX2 transcription factor activity. Interacts with COPS5; this interaction allows COPS5-dependent CDKN1B nuclear to cytoplasm translocation. Interacts with RNF2. Interacts with FOXO3; this interaction represses FOXO3 transactivation. Interacts with PTMA; regulates apoptotic process. Interacts with MYOD1, EP300 and DDX5; this interaction coordinates the association of anti-proliferative and pro-myogenic proteins at the myogenin promoter. Interacts with TP53; interaction is stress-dependent. Forms a complex with EP300 and TP53; this complex binds CDKN1A promoter leading to transcriptional induction of CDKN1A. Phosphorylated. Phosphorylation promotes DNA-binding activity. Post-translationally, acetylated. In terms of tissue distribution, highly expressed in pancreas and both ovaries and testes.

The protein resides in the nucleus. It is found in the cytoplasm. The protein localises to the perinuclear region. In terms of biological role, transcription regulator that converts stress signals into a program of gene expression that empowers cells with resistance to the stress induced by a change in their microenvironment. Thereby participates in the regulation of many processes namely cell-cycle, apoptosis, autophagy and DNA repair responses. Controls cell cycle progression and protects cells from genotoxic stress induced by doxorubicin through the complex formation with TP53 and EP300 that binds CDKN1A promoter leading to transcriptional induction of CDKN1A. Protects pancreatic cancer cells from stress-induced cell death by binding the RELB promoter and activating its transcription, leading to IER3 transactivation. Negatively regulates apoptosis through interaction with PTMA. Inhibits autophagy-induced apoptosis in cardiac cells through FOXO3 interaction, inducing cytoplasmic translocation of FOXO3 thereby preventing the FOXO3 association with the pro-autophagic BNIP3 promoter. Inhibits cell growth and facilitates programmed cell death by apoptosis after adriamycin-induced DNA damage through transactivation of TP53. Regulates methamphetamine-induced apoptosis and autophagy through DDIT3-mediated endoplasmic reticulum stress pathway. Participates in DNA repair following gamma-irradiation by facilitating DNA access of the transcription machinery through interaction with MSL1 leading to inhibition of histone H4' Lys-16' acetylation (H4K16ac). Coactivator of PAX2 transcription factor activity, both by recruiting the EP300 cofactor to increase PAX2 transcription factor activity and by binding PAXIP1 to suppress PAXIP1-induced inhibition on PAX2. Positively regulates cell cycle progression through interaction with COPS5 inducing cytoplasmic translocation of CDKN1B leading to the CDKN1B degradation. Coordinates, through its interaction with EP300, the assiociation of MYOD1, EP300 and DDX5 to the MYOG promoter, leading to inhibition of cell-cycle progression and myogenic differentiation promotion. Negatively regulates beta cell proliferation via inhibition of cell-cycle regulatory genes expression through the suppression of their promoter activities. Also required for LHB expression and ovarian maturation. Exacerbates CNS inflammation and demyelination upon cuprizone treatment. The protein is Nuclear protein 1 of Mus musculus (Mouse).